The chain runs to 180 residues: Large ribosomal subunit protein uL5 (180 aa).

It belongs to the universal ribosomal protein uL5 family. As to quaternary structure, part of the 50S ribosomal subunit; part of the 5S rRNA/L5/L18/L25 subcomplex. Contacts the 5S rRNA and the P site tRNA. Forms a bridge to the 30S subunit in the 70S ribosome.

This is one of the proteins that bind and probably mediate the attachment of the 5S RNA into the large ribosomal subunit, where it forms part of the central protuberance. In the 70S ribosome it contacts protein S13 of the 30S subunit (bridge B1b), connecting the 2 subunits; this bridge is implicated in subunit movement. Contacts the P site tRNA; the 5S rRNA and some of its associated proteins might help stabilize positioning of ribosome-bound tRNAs. The sequence is that of Large ribosomal subunit protein uL5 from Ruminiclostridium cellulolyticum (strain ATCC 35319 / DSM 5812 / JCM 6584 / H10) (Clostridium cellulolyticum).